A 195-amino-acid polypeptide reads, in one-letter code: Protease (195 aa).

In terms of domain architecture, Peptidase A2 spans 71–149 (ALMLVDTGAE…DKWQILGRDV (79 aa)). Asp76 is an active-site residue.

This chain is Protease, found in Bos taurus (Bovine).